Here is a 508-residue protein sequence, read N- to C-terminus: Photosystem II CP47 reaction center protein (508 aa).

6 consecutive transmembrane segments (helical) span residues 21 to 36 (AVHI…WAGS), 101 to 115 (IVFS…IWHW), 140 to 156 (GIHL…FGAF), 203 to 218 (IAAG…FHLS), 237 to 252 (VLSS…AFVV), and 457 to 472 (TFAL…HGAR).

The protein belongs to the PsbB/PsbC family. PsbB subfamily. As to quaternary structure, PSII is composed of 1 copy each of membrane proteins PsbA, PsbB, PsbC, PsbD, PsbE, PsbF, PsbH, PsbI, PsbJ, PsbK, PsbL, PsbM, PsbT, PsbX, PsbY, PsbZ, Psb30/Ycf12, at least 3 peripheral proteins of the oxygen-evolving complex and a large number of cofactors. It forms dimeric complexes. The cofactor is Binds multiple chlorophylls. PSII binds additional chlorophylls, carotenoids and specific lipids..

It localises to the plastid. The protein localises to the chloroplast thylakoid membrane. Functionally, one of the components of the core complex of photosystem II (PSII). It binds chlorophyll and helps catalyze the primary light-induced photochemical processes of PSII. PSII is a light-driven water:plastoquinone oxidoreductase, using light energy to abstract electrons from H(2)O, generating O(2) and a proton gradient subsequently used for ATP formation. In Brachypodium distachyon (Purple false brome), this protein is Photosystem II CP47 reaction center protein.